An 850-amino-acid chain; its full sequence is Protein SEY1 (850 aa).

The disordered stretch occupies residues 1–27 (MSDLPPPDLGSEEISVSPTSSSSSFVP). Topologically, residues 1-741 (MSDLPPPDLG…KRALIQHVTH (741 aa)) are cytoplasmic. The span at 12-27 (EEISVSPTSSSSSFVP) shows a compositional bias: low complexity. Residues 64–297 (NNNYHIVSVF…NEDFLFKKYY (234 aa)) enclose the GB1/RHD3-type G domain. 74–81 (GSQSTGKS) is a binding site for GTP. Residues 742 to 762 (IPYYIYIVILVLGWNEFMAVL) traverse the membrane as a helical segment. Topologically, residues 763–765 (RNP) are lumenal. A helical transmembrane segment spans residues 766–786 (FFFTLLLMLGAGTYVLYHLNL). Topologically, residues 787 to 850 (LKPAMVVVQR…SDLTPPGEGS (64 aa)) are cytoplasmic. The interval 816-850 (QPQEHAKRLSKMAGITEDKPEEIEMSDLTPPGEGS) is disordered.

Belongs to the TRAFAC class dynamin-like GTPase superfamily. GB1/RHD3 GTPase family. RHD3 subfamily.

Its subcellular location is the endoplasmic reticulum membrane. In terms of biological role, cooperates with the reticulon proteins and tubule-shaping DP1 family proteins to generate and maintain the structure of the tubular endoplasmic reticulum network. Has GTPase activity, which is required for its function in ER organization. This is Protein SEY1 from Meyerozyma guilliermondii (strain ATCC 6260 / CBS 566 / DSM 6381 / JCM 1539 / NBRC 10279 / NRRL Y-324) (Yeast).